Consider the following 263-residue polypeptide: Hydroxyethylthiazole kinase 1 (263 aa).

Met-42 serves as a coordination point for substrate. Residues Lys-118 and Thr-164 each coordinate ATP. Gly-191 provides a ligand contact to substrate.

Belongs to the Thz kinase family. Mg(2+) serves as cofactor.

It catalyses the reaction 5-(2-hydroxyethyl)-4-methylthiazole + ATP = 4-methyl-5-(2-phosphooxyethyl)-thiazole + ADP + H(+). It participates in cofactor biosynthesis; thiamine diphosphate biosynthesis; 4-methyl-5-(2-phosphoethyl)-thiazole from 5-(2-hydroxyethyl)-4-methylthiazole: step 1/1. Functionally, catalyzes the phosphorylation of the hydroxyl group of 4-methyl-5-beta-hydroxyethylthiazole (THZ). The sequence is that of Hydroxyethylthiazole kinase 1 from Clostridium botulinum (strain 657 / Type Ba4).